Reading from the N-terminus, the 539-residue chain is Zinc finger and BTB domain-containing protein 7B (539 aa).

Residues cysteine 34–serine 115 enclose the BTB domain. Serine 150 is subject to Phosphoserine. A disordered region spans residues alanine 171–aspartate 308. Pro residues predominate over residues proline 182–proline 196. Residues valine 197–lysine 206 show a composition bias toward basic residues. Residues lysine 206 and lysine 212 each carry the N6-acetyllysine; by EP300; alternate modification. Glycyl lysine isopeptide (Lys-Gly) (interchain with G-Cter in ubiquitin); alternate cross-links involve residues lysine 206 and lysine 212. The span at tyrosine 273–leucine 282 shows a compositional bias: acidic residues. Residue lysine 335 is modified to N6-acetyllysine; by EP300; alternate. Lysine 335 is covalently cross-linked (Glycyl lysine isopeptide (Lys-Gly) (interchain with G-Cter in ubiquitin); alternate). The required for interaction with and acetylation by EP300 stretch occupies residues methionine 344–arginine 400. Residues glutamine 346–histidine 368 form a C2H2-type 1 zinc finger. Threonine 369 bears the Phosphothreonine mark. C2H2-type zinc fingers lie at residues phenylalanine 374 to histidine 396 and tyrosine 402 to histidine 424. The C2H2-type 4; atypical zinc-finger motif lies at tyrosine 430–cysteine 454. Disordered stretches follow at residues arginine 458–leucine 486 and phenylalanine 501–serine 539. Pro residues predominate over residues threonine 508–proline 517.

As to quaternary structure, homodimerizes. Interacts with NCL, NEDD4 and YBX1. Interacts with HNRNPU (via RNA-binding RGG-box region); the interaction facilitates the recruitment of long non-coding RNA Blnc1 by ZBTB7B. Interacts with HDAC4 and HDAC5; the interaction allows the recruitment of HDAC4 and HDAC5 on CD8 loci for deacetylation and possible inhibition of CD8 genes expression. Post-translationally, acetylated directly and specifically by EP300. EP300-mediated acetylation of Lys-206, Lys-212 and Lys-335 stabilizes the protein by antagonizing ubiquitin conjugation. In terms of processing, ubiquitinated, leading to proteasomal degradation. Competes with acetylation on Lys-206, Lys-212 and Lys-335.

It is found in the nucleus. In terms of biological role, transcription regulator that acts as a key regulator of lineage commitment of immature T-cell precursors. Exerts distinct biological functions in the mammary epithelial cells and T cells in a tissue-specific manner. Necessary and sufficient for commitment of CD4 lineage, while its absence causes CD8 commitment. Development of immature T-cell precursors (thymocytes) to either the CD4 helper or CD8 killer T-cell lineages correlates precisely with their T-cell receptor specificity for major histocompatibility complex class II or class I molecules, respectively. Cross-antagonism between ZBTB7B and CBF complexes are determinative to CD4 versus CD8 cell fate decision. Suppresses RUNX3 expression and imposes CD4+ lineage fate by inducing the SOCS suppressors of cytokine signaling. induces, as a transcriptional activator, SOCS genes expression which represses RUNX3 expression and promotes the CD4+ lineage fate. During CD4 lineage commitment, associates with multiple sites at the CD8 locus, acting as a negative regulator of the CD8 promoter and enhancers by epigenetic silencing through the recruitment of class II histone deacetylases, such as HDAC4 and HDAC5, to these loci. Regulates the development of IL17-producing CD1d-restricted naural killer (NK) T cells. Also functions as an important metabolic regulator in the lactating mammary glands. Critical feed-forward regulator of insulin signaling in mammary gland lactation, directly regulates expression of insulin receptor substrate-1 (IRS-1) and insulin-induced Akt-mTOR-SREBP signaling. Transcriptional repressor of the collagen COL1A1 and COL1A2 genes. May also function as a repressor of fibronectin and possibly other extracellular matrix genes. Potent driver of brown fat development, thermogenesis and cold-induced beige fat formation. Recruits the brown fat lncRNA 1 (Blnc1):HNRNPU ribonucleoprotein complex to activate thermogenic gene expression in brown and beige adipocytes. The chain is Zinc finger and BTB domain-containing protein 7B from Homo sapiens (Human).